Reading from the N-terminus, the 389-residue chain is MSRICYLDCFSGVSGDMLLGAFLDAGVEVAALEAGLAALHLDDLILRTKRVEDCGLSAIKVDVDSSRRQNLRTLPDLLRILQESDLSSLVQERAALVFTAIASAEAKVHGTSLEQVHFHEIGALDTIADVVGVVLCLELLQIDQLVCSPLPQPRGFIDCAHGRIPLPAPAVCEILRGVPSYGVALEQELVTPTGAALVKALVGAFGQFPPMQQLAVGYGAGSQRLANGQPNLLRIFVGTPDDVLEEQQVEVIETNLDDWNPESYPYLCERLFEHGALDVSLAPIQMKKGRPGFCLQVIAGREDSAQLKDIVLLETTALGLRFRFEYRRTLPRRELHIESPWGTMRVKEVQRGGRRVIIPEYEECRRVAGEYDLPLQEVYGRIQGLNFYE.

This sequence belongs to the LarC family.

This chain is Putative nickel insertion protein, found in Desulfotalea psychrophila (strain LSv54 / DSM 12343).